The chain runs to 208 residues: Uracil phosphoribosyltransferase (208 aa).

5-phospho-alpha-D-ribose 1-diphosphate contacts are provided by residues R78, R103, and 130–138; that span reads DPMLATGGS. Uracil-binding positions include I193 and 198–200; that span reads GDA. A 5-phospho-alpha-D-ribose 1-diphosphate-binding site is contributed by D199.

The protein belongs to the UPRTase family. It depends on Mg(2+) as a cofactor.

It catalyses the reaction UMP + diphosphate = 5-phospho-alpha-D-ribose 1-diphosphate + uracil. It participates in pyrimidine metabolism; UMP biosynthesis via salvage pathway; UMP from uracil: step 1/1. Its activity is regulated as follows. Allosterically activated by GTP. Catalyzes the conversion of uracil and 5-phospho-alpha-D-ribose 1-diphosphate (PRPP) to UMP and diphosphate. The sequence is that of Uracil phosphoribosyltransferase from Trichlorobacter lovleyi (strain ATCC BAA-1151 / DSM 17278 / SZ) (Geobacter lovleyi).